An 89-amino-acid polypeptide reads, in one-letter code: Large ribosomal subunit protein bL27 (89 aa).

The protein belongs to the bacterial ribosomal protein bL27 family.

This Bacteroides fragilis (strain ATCC 25285 / DSM 2151 / CCUG 4856 / JCM 11019 / LMG 10263 / NCTC 9343 / Onslow / VPI 2553 / EN-2) protein is Large ribosomal subunit protein bL27.